The sequence spans 254 residues: MSSPIPQALWSAQIPLHITHPASPTTPFITSIPRFSYLALLIPRLSTFFNSPCSSFHFEDVQLRNLAVGLLVDLYQPALPWKLTVNDGVGWDIADTFLNCVKEADFVRNGNANQIMKMSKENTTQLWNAVIDNDHPSFNRINSHLLNAPTALKHVPIRIYVPTSGPDSSATHPEHATFKVIQSLMAATSSDRRPKLLGQALKEVLPGLFPSSRDPILAKVVMHGAGVPFDAPLEDLMREAAYPDGWLCLVVIVL.

A Glycyl lysine isopeptide (Lys-Gly) (interchain with G-Cter in ATG12) cross-link involves residue lysine 102.

It belongs to the ATG5 family. As to quaternary structure, conjugated with ATG12. The ATG5-ATG12 conjugate forms a complex with several units of ATG16. The ATG12-ATG5 conjugate also associates with ATG3. In terms of processing, conjugated to ATG12; which is essential for autophagy. Conjugation with ATG12 involves ATG7 as an E1-like activating enzyme and ATG10 as an E2-like conjugating enzyme.

It localises to the preautophagosomal structure membrane. Its function is as follows. Involved in cytoplasm to vacuole transport (Cvt) and autophagic vesicle formation. Autophagy is essential for maintenance of amino acid levels and protein synthesis under nitrogen starvation. Required for selective autophagic degradation of the nucleus (nucleophagy). Also required for mitophagy, which eliminates defective or superfluous mitochondria in order to fulfill cellular energy requirements and prevent excess ROS production. Conjugation with ATG12, through a ubiquitin-like conjugating system involving ATG7 as an E1-like activating enzyme and ATG10 as an E2-like conjugating enzyme, is essential for its function. The ATG12-ATG5 conjugate acts as an E3-like enzyme which is required for lipidation of ATG8 and ATG8 association to the vesicle membranes. ATG12-ATG5 rearranges the ATG3 catalytic center and enhances its E2 activity. Autophagy is required for proper vegetative growth, asexual/sexual reproduction, and full virulence. Autophagy is particularly involved in the biosynthesis of deoxynivalenol (DON), an important virulence determinant. The chain is Autophagy-related protein 5 from Gibberella zeae (strain ATCC MYA-4620 / CBS 123657 / FGSC 9075 / NRRL 31084 / PH-1) (Wheat head blight fungus).